The sequence spans 149 residues: Large ribosomal subunit protein eL8 (149 aa).

Belongs to the eukaryotic ribosomal protein eL8 family. Part of the 50S ribosomal subunit. Probably part of the RNase P complex.

It localises to the cytoplasm. Functionally, multifunctional RNA-binding protein that recognizes the K-turn motif in ribosomal RNA, the RNA component of RNase P, box H/ACA, box C/D and box C'/D' sRNAs. The polypeptide is Large ribosomal subunit protein eL8 (Pyrobaculum calidifontis (strain DSM 21063 / JCM 11548 / VA1)).